A 415-amino-acid chain; its full sequence is Gamma-glutamyl phosphate reductase (415 aa).

Belongs to the gamma-glutamyl phosphate reductase family.

The protein localises to the cytoplasm. It catalyses the reaction L-glutamate 5-semialdehyde + phosphate + NADP(+) = L-glutamyl 5-phosphate + NADPH + H(+). It functions in the pathway amino-acid biosynthesis; L-proline biosynthesis; L-glutamate 5-semialdehyde from L-glutamate: step 2/2. Catalyzes the NADPH-dependent reduction of L-glutamate 5-phosphate into L-glutamate 5-semialdehyde and phosphate. The product spontaneously undergoes cyclization to form 1-pyrroline-5-carboxylate. The sequence is that of Gamma-glutamyl phosphate reductase from Thermotoga sp. (strain RQ2).